A 223-amino-acid chain; its full sequence is Deoxyribose-phosphate aldolase (223 aa).

The active-site Proton donor/acceptor is the Asp91. Residue Lys153 is the Schiff-base intermediate with acetaldehyde of the active site. Lys182 acts as the Proton donor/acceptor in catalysis.

The protein belongs to the DeoC/FbaB aldolase family. DeoC type 1 subfamily.

It localises to the cytoplasm. The enzyme catalyses 2-deoxy-D-ribose 5-phosphate = D-glyceraldehyde 3-phosphate + acetaldehyde. The protein operates within carbohydrate degradation; 2-deoxy-D-ribose 1-phosphate degradation; D-glyceraldehyde 3-phosphate and acetaldehyde from 2-deoxy-alpha-D-ribose 1-phosphate: step 2/2. In terms of biological role, catalyzes a reversible aldol reaction between acetaldehyde and D-glyceraldehyde 3-phosphate to generate 2-deoxy-D-ribose 5-phosphate. This Streptococcus pyogenes serotype M3 (strain ATCC BAA-595 / MGAS315) protein is Deoxyribose-phosphate aldolase.